A 394-amino-acid polypeptide reads, in one-letter code: MSWSFLTRLLEEIHNHSTFVGKIWLSVLIVFRIVLTAVGGESIYYDEQSKFVCNTEQPGCENVCYDAFAPLSHVRFWVFQIILVATPSVMYLGYAIHKIARMVEHSDVDRRFRSKSFSTRWKQHRGLEEAEDDHEEDPMMYPEIELESERENKEQQPPAKAKHDGRRRIREDGLMRIYVLQLLVRATFEVGFLIGQYLLYGFEVSPVFVCSRKPCPHKIDCFISRPTEKTIFLLIMYGVSCMCLLLNVWEMLHLGFGTIRDTLNNKRKELEDSGTYNYPFTWNTPSAPPGYNIAVKPDQMQYTELSNAKMAYKQNKANIAQEQQYGSNEENIPADLENLQREIKVAQERLDMAIQAYNNQNNPGSSSREKKSKAGSNKSSASSKSGDGKNSVWI.

Residues 1–22 lie on the Cytoplasmic side of the membrane; that stretch reads MSWSFLTRLLEEIHNHSTFVGK. The helical transmembrane segment at 23 to 45 threads the bilayer; the sequence is IWLSVLIVFRIVLTAVGGESIYY. Residues 46–75 lie on the Extracellular side of the membrane; that stretch reads DEQSKFVCNTEQPGCENVCYDAFAPLSHVR. Residues 76–95 traverse the membrane as a helical segment; sequence FWVFQIILVATPSVMYLGYA. The Cytoplasmic portion of the chain corresponds to 96–176; sequence IHKIARMVEH…RRIREDGLMR (81 aa). A helical membrane pass occupies residues 177-199; the sequence is IYVLQLLVRATFEVGFLIGQYLL. At 200-229 the chain is on the extracellular side; it reads YGFEVSPVFVCSRKPCPHKIDCFISRPTEK. Residues 230 to 252 traverse the membrane as a helical segment; the sequence is TIFLLIMYGVSCMCLLLNVWEML. Residues 253–394 lie on the Cytoplasmic side of the membrane; it reads HLGFGTIRDT…SGDGKNSVWI (142 aa). A disordered region spans residues 354-394; it reads IQAYNNQNNPGSSSREKKSKAGSNKSSASSKSGDGKNSVWI. The segment covering 356–366 has biased composition (polar residues); the sequence is AYNNQNNPGSS. Over residues 374–394 the composition is skewed to low complexity; it reads AGSNKSSASSKSGDGKNSVWI.

The protein belongs to the connexin family. Gamma-type subfamily. A connexon is composed of a hexamer of connexins. Mostly in heart and stomach.

The protein localises to the cell membrane. It is found in the cell junction. Its subcellular location is the gap junction. One gap junction consists of a cluster of closely packed pairs of transmembrane channels, the connexons, through which materials of low MW diffuse from one cell to a neighboring cell. The polypeptide is Gap junction gamma-1 protein (GJC1) (Gallus gallus (Chicken)).